A 363-amino-acid polypeptide reads, in one-letter code: 3-isopropylmalate dehydrogenase (363 aa).

78 to 91 (GKKWDTLPINERPE) lines the NAD(+) pocket. Substrate-binding residues include arginine 99, arginine 109, arginine 138, and aspartate 227. Mg(2+)-binding residues include aspartate 227, aspartate 251, and aspartate 255. 285 to 297 (GSAPDIQGKNIAN) contributes to the NAD(+) binding site.

It belongs to the isocitrate and isopropylmalate dehydrogenases family. LeuB type 1 subfamily. Homodimer. Mg(2+) is required as a cofactor. Mn(2+) serves as cofactor.

The protein resides in the cytoplasm. It catalyses the reaction (2R,3S)-3-isopropylmalate + NAD(+) = 4-methyl-2-oxopentanoate + CO2 + NADH. Its pathway is amino-acid biosynthesis; L-leucine biosynthesis; L-leucine from 3-methyl-2-oxobutanoate: step 3/4. Its function is as follows. Catalyzes the oxidation of 3-carboxy-2-hydroxy-4-methylpentanoate (3-isopropylmalate) to 3-carboxy-4-methyl-2-oxopentanoate. The product decarboxylates to 4-methyl-2 oxopentanoate. This is 3-isopropylmalate dehydrogenase from Buchnera aphidicola subsp. Diuraphis noxia.